The sequence spans 1043 residues: Integrator complex subunit 3 (1043 aa).

Position 1 is an N-acetylmethionine (methionine 1). A phosphoserine mark is found at serine 502, serine 537, and serine 995. The tract at residues 977 to 1043 (YEDSSTKPPK…GSSAVGSDSD (67 aa)) is disordered. The segment covering 1008-1022 (AEEESGSSSASEEED) has biased composition (acidic residues).

This sequence belongs to the Integrator subunit 3 family. In terms of assembly, component of the Integrator complex, composed of core subunits INTS1, INTS2, INTS3, INTS4, INTS5, INTS6, INTS7, INTS8, INTS9/RC74, INTS10, INTS11/CPSF3L, INTS12, INTS13, INTS14 and INTS15. The core complex associates with protein phosphatase 2A subunits PPP2CA and PPP2R1A, to form the Integrator-PP2A (INTAC) complex. Component of the SOSS complex, composed of SOSS-B (SOSS-B1/NABP2 or SOSS-B2/NABP1), SOSS-A/INTS3 and SOSS-C/INIP. SOSS complexes containing SOSS-B1/NABP2 are more abundant than complexes containing SOSS-B2/NABP1. Interacts with SOSS-B1/NABP2, SOSS-B2/NABP1 and SOSS-C/INIP; the interaction is direct. Interacts with NBN/NBS1.

Its subcellular location is the nucleus. The protein localises to the cytoplasm. Its function is as follows. Component of the integrator complex, a multiprotein complex that terminates RNA polymerase II (Pol II) transcription in the promoter-proximal region of genes. The integrator complex provides a quality checkpoint during transcription elongation by driving premature transcription termination of transcripts that are unfavorably configured for transcriptional elongation: the complex terminates transcription by (1) catalyzing dephosphorylation of the C-terminal domain (CTD) of Pol II subunit POLR2A/RPB1 and SUPT5H/SPT5, (2) degrading the exiting nascent RNA transcript via endonuclease activity and (3) promoting the release of Pol II from bound DNA. The integrator complex is also involved in terminating the synthesis of non-coding Pol II transcripts, such as enhancer RNAs (eRNAs), small nuclear RNAs (snRNAs), telomerase RNAs and long non-coding RNAs (lncRNAs). Within the integrator complex, INTS3 is involved in the post-termination step: INTS3 binds INTS7 in the open conformation of integrator complex and prevents the rebinding of Pol II to the integrator after termination cycle. Mediates recruitment of cytoplasmic dynein to the nuclear envelope, probably as component of the integrator complex. Functionally, component of the SOSS complex, a multiprotein complex that functions downstream of the MRN complex to promote DNA repair and G2/M checkpoint. The SOSS complex associates with single-stranded DNA at DNA lesions and influences diverse endpoints in the cellular DNA damage response including cell-cycle checkpoint activation, recombinational repair and maintenance of genomic stability. The SOSS complex is required for efficient homologous recombination-dependent repair of double-strand breaks (DSBs) and ATM-dependent signaling pathways. In the SOSS complex, it is required for the assembly of the complex and for stabilization of the complex at DNA damage sites. The protein is Integrator complex subunit 3 of Homo sapiens (Human).